Consider the following 377-residue polypeptide: G-protein coupled receptor 54 (377 aa).

The Extracellular portion of the chain corresponds to 1-49 (MYSSEELWNSTEQVWINGSGTNFSLGRHEDDEEEEGDKHPFFTDAWLVP). Residues asparagine 9, asparagine 17, and asparagine 22 are each glycosylated (N-linked (GlcNAc...) asparagine). A helical transmembrane segment spans residues 50 to 70 (LFFSLIMLVGLVGNSLVIYVI). Topologically, residues 71 to 91 (SKHRQMRTATNFYIANLAATD) are cytoplasmic. A helical membrane pass occupies residues 92–112 (IIFLVCCVPFTATLYPLPGWI). Residues 113-119 (FGNFMCK) are Extracellular-facing. A disulfide bridge connects residues cysteine 118 and cysteine 198. The chain crosses the membrane as a helical span at residues 120–140 (FVAFLQQVTVQATCITLTAMS). Topologically, residues 141 to 160 (GDRCYVTVYPLKSLRHRTPK) are cytoplasmic. The chain crosses the membrane as a helical span at residues 161–181 (VAMIVSICIWIGSFVLSTPIL). The Extracellular portion of the chain corresponds to 182-209 (MYQRIEEGYWYGPRQYCMERFPSKTHER). Residues 210-230 (AFILYQFIAAYLLPVLTISFC) traverse the membrane as a helical segment. At 231–269 (YTLMVKRVGQPTVEPVDNNYQVNLLSERTISIRSKVSKM) the chain is on the cytoplasmic side. The helical transmembrane segment at 270-290 (VVVIVLLFAICWGPIQIFVLF) threads the bilayer. Residues 291 to 305 (QSFYPNYQPNYATYK) lie on the Extracellular side of the membrane. Residues 306–328 (IKTWANCMSYANSSVNPIVYGFM) form a helical membrane-spanning segment. Over 329 to 377 (GASFQKSFRKTFPFLFKHKVRDSSMASRTANAEIKFVAAEEGNNNNAVN) the chain is Cytoplasmic.

The protein belongs to the G-protein coupled receptor 1 family. In terms of tissue distribution, expressed in a significantly high percentage (45-60%) of mature GnRH1, GnRH2, and GnRH3 neurons and in immature GnRH3 neurons, which had migrated to the vicinity of their final locations in the brain. Only 5% of immature GnRH1 and GnRH2 neurons have receptor transcripts.

The protein localises to the cell membrane. Its function is as follows. Receptor speculated to be essential for sexual development. May regulate gonadotropin-releasing hormone (GnRH) secretion. The receptor expression could be a 'stop signal' for GnRH1, GnRH2, and GnRH3 neuronal migration, leading to suppression of cell growth and modulation of GnRH secretion, which is important for normal sexual development. This is G-protein coupled receptor 54 (gpr54) from Oreochromis niloticus (Nile tilapia).